Consider the following 429-residue polypeptide: Glucose-6-phosphate isomerase (429 aa).

Residue E282 is the Proton donor of the active site. Residues H303 and K418 contribute to the active site.

Belongs to the GPI family.

The protein resides in the cytoplasm. The catalysed reaction is alpha-D-glucose 6-phosphate = beta-D-fructose 6-phosphate. It participates in carbohydrate biosynthesis; gluconeogenesis. The protein operates within carbohydrate degradation; glycolysis; D-glyceraldehyde 3-phosphate and glycerone phosphate from D-glucose: step 2/4. Functionally, catalyzes the reversible isomerization of glucose-6-phosphate to fructose-6-phosphate. This Mesomycoplasma hyopneumoniae (strain 232) (Mycoplasma hyopneumoniae) protein is Glucose-6-phosphate isomerase.